The primary structure comprises 545 residues: Zinc finger protein 697 (545 aa).

A disordered region spans residues 1–143; sequence MKQEDNQGVC…EQPAPPVLPW (143 aa). Lys-2 participates in a covalent cross-link: Glycyl lysine isopeptide (Lys-Gly) (interchain with G-Cter in SUMO2). Residues 23–36 show a composition bias toward acidic residues; the sequence is DFEDSEDREGDPEE. Residues 45-55 are compositionally biased toward basic and acidic residues; it reads DTNKREGHPEP. 2 stretches are compositionally biased toward acidic residues: residues 79-94 and 118-135; these read LSEE…EDDQ and EDDD…EEEQ. C2H2-type zinc fingers lie at residues 189–211, 261–283, 289–311, 317–339, 353–375, 381–403, 409–431, 437–459, 465–487, 493–515, and 521–543; these read TICP…QRIH, FRCG…LRLH, NLCA…RRLH, YPCP…RRAH, FACG…QRIH, HGCG…QRVH, YMCS…KRTH, YVCR…LRVH, FRCG…QRTH, YTCI…RRIH, and HKCA…QKLH.

Belongs to the krueppel C2H2-type zinc-finger protein family.

Its subcellular location is the nucleus. RNA-interacting protein with a high number of miRNA targets. Acts as a damage-induced regulator of muscle remodeling by mediating the interferon gamma response in muscle cells. The sequence is that of Zinc finger protein 697 from Homo sapiens (Human).